Reading from the N-terminus, the 236-residue chain is Bacterial rhodopsin CSR3 (236 aa).

At Met1–Ala3 the chain is on the extracellular side. Residues Val4 to Leu25 traverse the membrane as a helical segment. The Cytoplasmic portion of the chain corresponds to Tyr26–Glu34. Residues Arg35–Ala56 traverse the membrane as a helical segment. Residues Phe57–Val70 are Extracellular-facing. The helical transmembrane segment at Gly71 to Ala92 threads the bilayer. The Cytoplasmic portion of the chain corresponds to Gly93 to Ser95. Residues Arg96–Val118 traverse the membrane as a helical segment. Topologically, residues Ala119–Thr122 are extracellular. The helical transmembrane segment at Leu123–Val150 threads the bilayer. Residues Pro151–Asp153 lie on the Cytoplasmic side of the membrane. Residues Pro154–Gly181 form a helical membrane-spanning segment. Over Pro182–Thr189 the chain is Extracellular. Residues Tyr190–Lys222 traverse the membrane as a helical segment. Lys205 carries the N6-(retinylidene)lysine modification. Over Leu223 to Asp236 the chain is Cytoplasmic.

This sequence belongs to the archaeal/bacterial/fungal opsin family.

The protein resides in the cell membrane. This is Bacterial rhodopsin CSR3 from Haloarcula vallismortis (Halobacterium vallismortis).